The primary structure comprises 1343 residues: MESRALLAVALWFCVETRAASVGLPGDSLHPPKLSTQKDILTILANTTLQITCRGQRDLDWLWPNTPRDSEERVLVTECGDSIFCKTLTVPRVVGNDTGAYKCFYRDTDVSSIVYVYVQDHRSPFIASVSDEHGIVYITENKNKTVVIPCRGSISNLNVSLCARYPEKRFVPDGNRISWDSEKGFTIPSYMISYAGMVFCEAKINDETYQSIMYIVLVVGYRIYDVVLSPPHEIELSAGEKLVLNCTARTELNVGLDFSWQFPSSKHQHKKIVNRDVKSLPGTVAKMFLSTLTIDSVTKSDQGEYTCTAYSGLMTKKNKTFVRVHTKPFIAFGSGMKSLVEATVGSQVRIPVKYLSYPAPDIKWYRNGRPIESNYTMIVGDELTIMEVSERDAGNYTVILTNPISMEKQSHMVSLVVNVPPQIGEKALISPMDSYQYGTMQTLTCTVYANPPLHHIQWYWQLEEACSYRPSQTNPYTCKEWRHVKDFQGGNKIEVTKNQYALIEGKNKTVSTLVIQAAYVSALYKCEAINKAGRGERVISFHVIRGPEITVQPATQPTERESMSLLCTADRNTFENLTWYKLGSQATSVHMGESLTPVCKNLDALWKLNGTVFSNSTNDILIVAFQNASLQDQGNYVCSAQDKKTKKRHCLVKQLVILERMAPMITGNLENQTTTIGETIEVVCPTSGNPTPLITWFKDNETLVEDSGIVLKDGNRNLTIRRVRKEDGGLYTCQACNVLGCARAETLFIIEGVQEKTNLEVIILVGTAVIAMFFWLLLVILVRTVKRANEGELKTGYLSIVMDPDELPLDERCERLPYDASKWEFPRDRLKLGKPLGRGAFGQVIEADAFGIDKTATCKTVAVKMLKEGATHSEHRALMSELKILIHIGHHLNVVNLLGACTKPGGPLMVIVEFCKFGNLSTYLRGKRNEFVPYKSKGARFRSGKDYVGELSVDLKRRLDSITSSQSSASSGFVEEKSLSDVEEEEASEELYKDFLTLEHLICYSFQVAKGMEFLASRKCIHRDLAARNILLSEKNVVKICDFGLARDIYKDPDYVRKGDPRLPLKWMAPETIFDRIYTIQSGVWSFGVLLWEIFSLGASPYPGVKIDEKFCRRLKEGTRMRAPDYTTPEMYQTMLDCWHEDPNQRPAFSELVEHLGNLLQANAQQDGKDYIVLPMSETLSMEEDSGLSLPTSPVSCMEEEEVCDPKFHYDNTAGISHYLQNSKRKSRPVSVKTFEDIPLEEPEVKVIPDDSQTDSGMVLASEELKTLEDRNKLSPSFGGMMPSKSRESVASEGSNQTSGYQSGYHSDDTDTTVYSSDEAGLLKLVDVAGHVDSGTTLRSSPV.

Positions 1–19 are cleaved as a signal peptide; that stretch reads MESRALLAVALWFCVETRA. The Extracellular segment spans residues 20–760; the sequence is ASVGLPGDSL…EGVQEKTNLE (741 aa). Asn46, Asn96, Asn143, Asn158, and Asn245 each carry an N-linked (GlcNAc...) asparagine glycan. Ig-like C2-type domains lie at 46-109, 141-207, 224-320, 328-414, 421-540, 547-654, and 663-749; these read NTTL…RDTD, NKNK…INDE, YDVV…KNKT, PFIA…HMVS, PQIG…RVIS, PEIT…LVKQ, and PMIT…TLFI. Cys53 and Cys103 are oxidised to a cystine. A disulfide bridge connects residues Cys150 and Cys200. An intrachain disulfide couples Cys246 to Cys307. Residues Asn318, Asn374, Asn395, Asn507, Asn576, Asn609, Asn615, Asn627, Asn671, Asn700, and Asn717 are each glycosylated (N-linked (GlcNAc...) asparagine). Intrachain disulfides connect Cys445–Cys526 and Cys567–Cys638. A disulfide bridge links Cys684 with Cys733. The chain crosses the membrane as a helical span at residues 761–781; the sequence is VIILVGTAVIAMFFWLLLVIL. Topologically, residues 782–1343 are cytoplasmic; it reads VRTVKRANEG…SGTTLRSSPV (562 aa). Tyr797 is subject to Phosphotyrosine. A Protein kinase domain is found at 830-1158; the sequence is LKLGKPLGRG…FSELVEHLGN (329 aa). ATP-binding positions include 836–844 and Lys864; that span reads LGRGAFGQV. Tyr947 carries the phosphotyrosine; by autocatalysis modification. 2 positions are modified to phosphoserine: Ser978 and Ser980. The residue at position 992 (Tyr992) is a Phosphotyrosine; by autocatalysis. A disulfide bridge links Cys1020 with Cys1041. The active-site Proton acceptor is the Asp1024. 4 positions are modified to phosphotyrosine; by autocatalysis: Tyr1050, Tyr1055, Tyr1171, and Tyr1210. Phosphoserine occurs at positions 1227 and 1231. Thr1234 is modified (phosphothreonine). Residues 1267 to 1314 form a disordered region; it reads TLEDRNKLSPSFGGMMPSKSRESVASEGSNQTSGYQSGYHSDDTDTTV. The segment covering 1292–1305 has biased composition (polar residues); the sequence is SEGSNQTSGYQSGY. Residues Tyr1301, Tyr1305, and Tyr1315 each carry the phosphotyrosine; by autocatalysis modification.

The protein belongs to the protein kinase superfamily. Tyr protein kinase family. CSF-1/PDGF receptor subfamily. Homodimer in the presence of bound dimeric VEGFA, VEGFC or VEGFD ligands; monomeric in the absence of bound ligands. Can also form heterodimers with FLT1/VEGFR1 and KDR/VEGFR2. Interacts (tyrosine phosphorylated) with LFYN, NCK1, PLCG1. Interacts (tyrosine-phosphorylated active form preferentially) with DAB2IP (via C2 domain and active form preferentially); the interaction occurs at the late phase of VEGFA response and inhibits KDR/VEGFR2 activity. Interacts with SHBSH2D2A/TSAD, GRB2, MYOF, CBL and PDCD6. Interacts (via C-terminus domain) with ERN1 (via kinase domain); the interaction is facilitated in a XBP1- and vascular endothelial growth factor (VEGF)-dependent manner in endothelial cells. Interacts (via juxtamembrane region) with chaperone PDCL3 (via thioredoxin fold region); the interaction leads to increased KDR/VEGFR2 abundance through inhibition of its ubiquitination and degradation. Interacts (tyrosine phosphorylated) with CCDC88A/GIV (via SH2-like region); binding requires autophosphorylation of the KDR/VEGFR2 C-terminal region. Interacts with isoform 2 of BSG. Interacts with SLC31A1; this interaction is induced upon VEGFA stimulation leading to SLC31A1 and KDR subsequent co-internalization to early endosomes, thereby activating KDR downstream signaling in endothelial cells. Post-translationally, N-glycosylated. Ubiquitinated. Tyrosine phosphorylation of the receptor promotes its poly-ubiquitination, leading to its degradation via the proteasome or lysosomal proteases. In terms of processing, autophosphorylated on tyrosine residues upon ligand binding. Autophosphorylation occurs in trans, i.e. one subunit of the dimeric receptor phosphorylates tyrosine residues on the other subunit. Phosphorylation at Tyr-947 is important for interaction with SH2D2A/TSAD and VEGFA-mediated reorganization of the actin cytoskeleton. Phosphorylation at Tyr-1171 is important for interaction with PLCG1 and SHB. Phosphorylation at Tyr-1210 is important for interaction with NCK1 and FYN. Dephosphorylated by PTPRB. Dephosphorylated by PTPRJ at Tyr-797, Tyr-947, Tyr-992, Tyr-1050, Tyr-1055, Tyr-1171 and Tyr-1210. Post-translationally, the inhibitory disulfide bond between Cys-1020 and Cys-1041 may serve as a specific molecular switch for H(2)S-induced modification that regulates KDR/VEGFR2 function. In terms of tissue distribution, expressed in the post-pubertal mammary glands.

It localises to the cell membrane. The protein resides in the cytoplasm. The protein localises to the nucleus. It is found in the cytoplasmic vesicle. Its subcellular location is the early endosome. It localises to the cell junction. The protein resides in the endoplasmic reticulum. It catalyses the reaction L-tyrosyl-[protein] + ATP = O-phospho-L-tyrosyl-[protein] + ADP + H(+). Its activity is regulated as follows. Present in an inactive conformation in the absence of bound ligand. Binding of VEGFA, VEGFC or VEGFD leads to dimerization and activation by autophosphorylation on tyrosine residues. May be regulated by hydrogen sulfide (H(2)S) levels via a sensitive intracellular disulfide bond. Functionally, tyrosine-protein kinase that acts as a cell-surface receptor for VEGFA, VEGFC and VEGFD. Plays an essential role in the regulation of angiogenesis, vascular development, vascular permeability, and embryonic hematopoiesis. Promotes proliferation, survival, migration and differentiation of endothelial cells. Promotes reorganization of the actin cytoskeleton. Isoforms lacking a transmembrane domain may function as decoy receptors for VEGFA, VEGFC and/or VEGFD. Modulates FLT1 and FLT4 signaling by forming heterodimers. Binding of vascular growth factors to isoform 1 leads to the activation of several signaling cascades. Activation of PLCG1 leads to the production of the cellular signaling molecules diacylglycerol and inositol-1,4,5-trisphosphate and the activation of protein kinase C. Mediates activation of MAPK1/ERK2, MAPK3/ERK1 and the MAP kinase signaling pathway, as well as of the AKT1 signaling pathway. Mediates phosphorylation of PIK3R1, the regulatory subunit of phosphatidylinositol 3-kinase, reorganization of the actin cytoskeleton and activation of PTK2/FAK1. Required for VEGFA-mediated induction of NOS2 and NOS3, leading to the production of the signaling molecule nitric oxide (NO) by endothelial cells. Phosphorylates PLCG1. Promotes phosphorylation of FYN, NCK1, NOS3, PIK3R1, PTK2/FAK1 and SRC. This chain is Vascular endothelial growth factor receptor 2, found in Rattus norvegicus (Rat).